The sequence spans 243 residues: ATP synthase subunit a (243 aa).

8 helical membrane passes run 29 to 49 (NASLFMVLSTFLISLSCYVGL), 54 to 74 (VIPNPLQSIIEIIYDFIVSTI), 89 to 109 (VFTIFTFILVCNLLGILPLGF), 114 to 134 (HIAVTFAISMIVFISVTFIGF), 141 to 161 (FLHILLPQGTPMWLAPMMVLI), 177 to 197 (LAANMIAGHTIIKVIAGFVIN), 200 to 220 (IFLTPLPIAFIIILIGFEIFV), and 221 to 241 (AILQAYIFTVLTCVYLSDAVN).

Belongs to the ATPase A chain family. As to quaternary structure, F-type ATPases have 2 components, CF(1) - the catalytic core - and CF(0) - the membrane proton channel. CF(1) has five subunits: alpha(3), beta(3), gamma(1), delta(1), epsilon(1). CF(0) has three main subunits: a(1), b(2) and c(9-12). The alpha and beta chains form an alternating ring which encloses part of the gamma chain. CF(1) is attached to CF(0) by a central stalk formed by the gamma and epsilon chains, while a peripheral stalk is formed by the delta and b chains.

It is found in the cell inner membrane. Functionally, key component of the proton channel; it plays a direct role in the translocation of protons across the membrane. This Ehrlichia ruminantium (strain Welgevonden) protein is ATP synthase subunit a.